The chain runs to 48 residues: DNA-directed RNA polymerase subunit Rpo12 (48 aa).

Zn(2+) is bound by residues C9, C26, and C29.

The protein belongs to the archaeal Rpo12/eukaryotic RPC10 RNA polymerase subunit family. Part of the RNA polymerase complex. Zn(2+) is required as a cofactor.

It localises to the cytoplasm. It carries out the reaction RNA(n) + a ribonucleoside 5'-triphosphate = RNA(n+1) + diphosphate. In terms of biological role, DNA-dependent RNA polymerase (RNAP) catalyzes the transcription of DNA into RNA using the four ribonucleoside triphosphates as substrates. This is DNA-directed RNA polymerase subunit Rpo12 from Saccharolobus islandicus (strain Y.N.15.51 / Yellowstone #2) (Sulfolobus islandicus).